Reading from the N-terminus, the 267-residue chain is MASSSLLLACVVVAAMVSAVSCGPPKVPPGPNITTSYGDKWLEAKATWYGAPKGAGPKDNGGACGYKDVDKAPFLGMNSCGNDPIFKDGKGCGSCFEIKCSKPEACSDKPALIHVTDMNDEPIAAYHFDLSGLAFGAMAKDGKDEELRKAGIIDTQFRRVKCKYPADTKITFHIEKASNPNYLALLVKYVAGDGDVVEVEIKEKGSEEWKALKESWGAIWRIDTPKPLKGPFSVRVTTEGGEKIIAEDAIPDGWKADSVYKSNVQAK.

The signal sequence occupies residues 1-22 (MASSSLLLACVVVAAMVSAVSC). N32 carries N-linked (GlcNAc...) asparagine glycosylation. An Expansin-like EG45 domain is found at 61–167 (GGACGYKDVD…RRVKCKYPAD (107 aa)). Cystine bridges form between C64–C92, C95–C162, and C100–C106. Positions 181–262 (NYLALLVKYV…GWKADSVYKS (82 aa)) constitute an Expansin-like CBD domain.

The protein belongs to the expansin family. Expansin B subfamily. Expressed in mature anthers but not in vegetative or other floral tissues.

Its subcellular location is the secreted. The protein localises to the cell wall. It localises to the membrane. May cause loosening and extension of plant cell walls by disrupting non-covalent bonding between cellulose microfibrils and matrix glucans. No enzymatic activity has been found. May be required for rapid internodal elongation in deepwater rice during submergence. The polypeptide is Expansin-B1 (EXPB1a) (Oryza sativa subsp. japonica (Rice)).